Reading from the N-terminus, the 450-residue chain is tRNA-2-methylthio-N(6)-dimethylallyladenosine synthase (450 aa).

Residues 8–128 enclose the MTTase N-terminal domain; that stretch reads KRLYIKTYGC…LPELIARAHR (121 aa). Residues C17, C53, C91, C166, C170, and C173 each coordinate [4Fe-4S] cluster. Residues 152–382 enclose the Radical SAM core domain; sequence RPTGVTAFLT…QALLEQQQLA (231 aa). The TRAM domain maps to 385–447; it reads AAQAGRVLPV…RNSLAGVLEL (63 aa).

It belongs to the methylthiotransferase family. MiaB subfamily. As to quaternary structure, monomer. It depends on [4Fe-4S] cluster as a cofactor.

It localises to the cytoplasm. It catalyses the reaction N(6)-dimethylallyladenosine(37) in tRNA + (sulfur carrier)-SH + AH2 + 2 S-adenosyl-L-methionine = 2-methylsulfanyl-N(6)-dimethylallyladenosine(37) in tRNA + (sulfur carrier)-H + 5'-deoxyadenosine + L-methionine + A + S-adenosyl-L-homocysteine + 2 H(+). Catalyzes the methylthiolation of N6-(dimethylallyl)adenosine (i(6)A), leading to the formation of 2-methylthio-N6-(dimethylallyl)adenosine (ms(2)i(6)A) at position 37 in tRNAs that read codons beginning with uridine. The protein is tRNA-2-methylthio-N(6)-dimethylallyladenosine synthase of Phenylobacterium zucineum (strain HLK1).